Reading from the N-terminus, the 308-residue chain is MITVVGSGRVGATTAAMLGVLGVDNKIVLIDIIKGLPQGEALDLNHMSSILGLDVYYTGSNDYADMKGSDLVIVTAGLARKPGMTREQLLEQNAQIVANIGKEIAKYAPDSVVILTTNPLDAMTYVMWRATGFSRERVVGFSGVLDGGRLAFYAGQKLGISPASIIPIVLGQHGESMFPVPSKSFVFGVPLDKLLKPEEIKEAVEETVKAGARITELRGFSSNWAPGAGVAIMAKAVKRDERRALIASVVLDGEYGVRGIPVEVPVVLGRGGAIKVLEVELSPEEKQRFQQSVEAISKLLNSLPAQYK.

NAD(+)-binding positions include Gly6–Gly11 and Asp31. Positions 80 and 86 each coordinate substrate. NAD(+) is bound by residues Asn93 and Thr116–Asn118. Positions 118 and 149 each coordinate substrate. The Proton acceptor role is filled by His173.

Belongs to the LDH/MDH superfamily.

It carries out the reaction (S)-malate + NAD(+) = oxaloacetate + NADH + H(+). Functionally, catalyzes the reversible oxidation of malate to oxaloacetate. The polypeptide is Malate dehydrogenase (mdh) (Thermoproteus tenax (strain ATCC 35583 / DSM 2078 / JCM 9277 / NBRC 100435 / Kra 1)).